The following is a 402-amino-acid chain: GDSL esterase/lipase At1g20120 (402 aa).

The first 35 residues, 1-35, serve as a signal peptide directing secretion; it reads MLQDRVSGSLSSSKISRCVLFLSLFCFFLLTMHAS. The interval 41–69 is disordered; that stretch reads RVPNPGPSPAPEPKPCPSPGPNPAPATTK. Pro residues predominate over residues 44 to 64; that stretch reads NPGPSPAPEPKPCPSPGPNPA. An N-linked (GlcNAc...) asparagine glycan is attached at Asn-73. Catalysis depends on Ser-85, which acts as the Nucleophile. N-linked (GlcNAc...) asparagine glycans are attached at residues Asn-314 and Asn-367. Active-site residues include Asp-375 and His-378.

It belongs to the 'GDSL' lipolytic enzyme family.

It is found in the secreted. In Arabidopsis thaliana (Mouse-ear cress), this protein is GDSL esterase/lipase At1g20120.